A 525-amino-acid chain; its full sequence is GMP synthase [glutamine-hydrolyzing] (525 aa).

One can recognise a Glutamine amidotransferase type-1 domain in the interval 9 to 207 (RILILDFGSQ…VLQICQCEPL (199 aa)). The active-site Nucleophile is the Cys86. Active-site residues include His181 and Glu183. The region spanning 208 to 400 (WTPRNIIDQT…LGLPNAMLHR (193 aa)) is the GMPS ATP-PPase domain. ATP is bound at residue 235-241 (SGGVDSA).

Homodimer.

The catalysed reaction is XMP + L-glutamine + ATP + H2O = GMP + L-glutamate + AMP + diphosphate + 2 H(+). It functions in the pathway purine metabolism; GMP biosynthesis; GMP from XMP (L-Gln route): step 1/1. Catalyzes the synthesis of GMP from XMP. The chain is GMP synthase [glutamine-hydrolyzing] from Hamiltonella defensa subsp. Acyrthosiphon pisum (strain 5AT).